Consider the following 89-residue polypeptide: Small ribosomal subunit protein bS20 (89 aa).

Disordered stretches follow at residues 1–25 (MANI…ASMK) and 69–89 (KNAA…IQAS). A compositionally biased stretch (basic residues) spans 7 to 20 (AIKRAKTSEKRRAH).

This sequence belongs to the bacterial ribosomal protein bS20 family.

Binds directly to 16S ribosomal RNA. This chain is Small ribosomal subunit protein bS20, found in Geobacillus thermodenitrificans (strain NG80-2).